We begin with the raw amino-acid sequence, 611 residues long: Sensor histidine kinase WalK (611 aa).

At 1 to 13 (MNKVGFFRSIQFK) the chain is on the cytoplasmic side. Residues 14-34 (ITLIYVLLIIIAMQIIGVYFV) traverse the membrane as a helical segment. Over 35–182 (NQVEKSLISS…VFNQMKTINT (148 aa)) the chain is Extracellular. Residues 183–203 (ILASGTGLALVLTALLGIFLA) traverse the membrane as a helical segment. Residues 204 to 256 (RTITHPLSDMRKQAMELAKGNFSRKVKKYGHDEIGQLATTFNHLTRELEDAQA) form the HAMP domain. The Cytoplasmic portion of the chain corresponds to 204-611 (RTITHPLSDM…EEQEDDWDEA (408 aa)). A PAS domain is found at 263 to 324 (RKLASVIAYM…QENYTFEDLV (62 aa)). Residues 325-379 (EQQDSMLLEIERDDELTVLRVNFSVIQREHGKIDGLIAVIYDVTEQEKMDQERRE) form the PAC domain. The Histidine kinase domain maps to 383 to 602 (NVSHELRTPL…TITFTLPYKE (220 aa)). Phosphohistidine; by autocatalysis is present on His-386.

Homodimer. Interacts with YycH and YycI. Post-translationally, autophosphorylated.

Its subcellular location is the cell membrane. It catalyses the reaction ATP + protein L-histidine = ADP + protein N-phospho-L-histidine.. In terms of biological role, member of the two-component regulatory system WalK/WalR involved in the regulation of the ftsAZ operon, the yocH and ykvT, cwlO, lytE, ydjM, yjeA, yoeB genes and the tagAB and tagDEF operons. Phosphorylates WalR. This Bacillus subtilis (strain 168) protein is Sensor histidine kinase WalK.